Here is a 490-residue protein sequence, read N- to C-terminus: Mitochondrial-processing peptidase subunit beta (490 aa).

Residues 1–46 (MAAAAVARAVLFSAARRRLCGFTERLLIGGAAGRSLYFGGNRLRST) constitute a mitochondrion transit peptide. His102 provides a ligand contact to Zn(2+). Glu105 functions as the Proton acceptor in the catalytic mechanism. 2 residues coordinate Zn(2+): His106 and Glu182.

This sequence belongs to the peptidase M16 family. As to quaternary structure, heterodimer of PMPCA (alpha) and PMPCB (beta) subunits, forming the mitochondrial processing protease (MPP) in which PMPCA is involved in substrate recognition and binding and PMPCB is the catalytic subunit. Requires Zn(2+) as cofactor.

It localises to the mitochondrion matrix. The enzyme catalyses Release of N-terminal transit peptides from precursor proteins imported into the mitochondrion, typically with Arg in position P2.. With respect to regulation, binding to PMPCA is required for catalytic activity. Its function is as follows. Catalytic subunit of the essential mitochondrial processing protease (MPP), which cleaves the mitochondrial sequence off newly imported precursors proteins. Preferentially, cleaves after an arginine at position P2. Required for PINK1 turnover by coupling PINK1 mitochondrial import and cleavage, which results in subsequent PINK1 proteolysis. This is Mitochondrial-processing peptidase subunit beta (PMPCB) from Bos taurus (Bovine).